Here is a 526-residue protein sequence, read N- to C-terminus: ATP-dependent RNA helicase DBP3 (526 aa).

Basic and acidic residues predominate over residues 1-33; the sequence is MVEEHKNKKRRQEDGPADVPEKKVKVSKSEKKD. Residues 1-86 are disordered; the sequence is MVEEHKNKKR…SSQGYTQSES (86 aa). Residues 34–65 are compositionally biased toward basic residues; the sequence is KKEKKEKKEKKEKKEKKEKKEKKEKKEKKKKY. The span at 69–86 shows a compositional bias: polar residues; sequence ATISGSAQSSQGYTQSES. The Q motif signature appears at 118-144; sequence LSFDQIQLNSKISAVVNKFPTPTPIQS. The region spanning 147–318 is the Helicase ATP-binding domain; sequence WPYLLSGKDV…STFMNQPVKV (172 aa). An ATP-binding site is contributed by 160–167; it reads AETGSGKT. A DEAD box motif is present at residues 265–268; it reads DEAD. Positions 334–496 constitute a Helicase C-terminal domain; sequence QIVEVIEPFD…PVPDELLKFG (163 aa).

It belongs to the DEAD box helicase family. DDX5/DBP2 subfamily.

The protein resides in the nucleus. Its subcellular location is the nucleolus. It catalyses the reaction ATP + H2O = ADP + phosphate + H(+). Its function is as follows. ATP-dependent RNA helicase required for 60S ribosomal subunit synthesis. Involved in efficient pre-rRNA processing, predominantly at site A3, which is necessary for the normal formation of 25S and 5.8S rRNAs. This is ATP-dependent RNA helicase DBP3 (DBP3) from Scheffersomyces stipitis (strain ATCC 58785 / CBS 6054 / NBRC 10063 / NRRL Y-11545) (Yeast).